Consider the following 276-residue polypeptide: Rhomboid protease GlpG (276 aa).

6 helical membrane-spanning segments follow: residues 94 to 114 (GPVTWIVMLACVLVYIAMSLI), 142 to 162 (IFMHFSLMHILFNLLWWWYLG), 169 to 189 (LGSGKLIVITVISALLSGYVQ), 192 to 212 (FSGPWFGGLSGVVYALMGYVW), 229 to 249 (LIIFALLWIVAGWFDWFGMSM), and 250 to 270 (ANGAHIAGLIVGLAMAFVDTL). Ser-201 (nucleophile) is an active-site residue. His-254 is an active-site residue.

The protein belongs to the peptidase S54 family.

Its subcellular location is the cell inner membrane. It carries out the reaction Cleaves type-1 transmembrane domains using a catalytic dyad composed of serine and histidine that are contributed by different transmembrane domains.. In terms of biological role, rhomboid-type serine protease that catalyzes intramembrane proteolysis. The polypeptide is Rhomboid protease GlpG (Salmonella agona (strain SL483)).